The following is a 155-amino-acid chain: Ribosome maturation factor RimP (155 aa).

It belongs to the RimP family.

Its subcellular location is the cytoplasm. Its function is as follows. Required for maturation of 30S ribosomal subunits. The polypeptide is Ribosome maturation factor RimP (Prochlorococcus marinus (strain MIT 9301)).